Consider the following 311-residue polypeptide: MALPIIIDCDPGHDDAIALVLALASPELEVKAITSSAGNQTPEKTLRNVLRMLTLLKRLDIPVAGGAVKPLMRELIIADNVHGESGLDGPALPEPSFAPQSGTAVELMAKTLRESAQPVTIVSTGPQTNVALLLNSHPELHTKIARIVIMGGAMALGNWTPAAEFNIYVDPEAAEIVFQSGIPVVMAGLDVTHKAQIHAADIERFRAIGNPISTIVAELLDFFMEYHKDEKWGFVGAPLHDPCTIAWLLKPEIFTTVERWVGVETQGKYTQGMTVVDYYFLTGNKPNATVMVDVDRQGFVDLLAERLQYYA.

Histidine 240 is a catalytic residue.

It belongs to the IUNH family. RihA subfamily.

In terms of biological role, hydrolyzes cytidine or uridine to ribose and cytosine or uracil, respectively. In Salmonella typhimurium (strain LT2 / SGSC1412 / ATCC 700720), this protein is Pyrimidine-specific ribonucleoside hydrolase RihA.